A 175-amino-acid chain; its full sequence is ATP synthase subunit delta (175 aa).

Belongs to the ATPase delta chain family. In terms of assembly, F-type ATPases have 2 components, F(1) - the catalytic core - and F(0) - the membrane proton channel. F(1) has five subunits: alpha(3), beta(3), gamma(1), delta(1), epsilon(1). F(0) has three main subunits: a(1), b(2) and c(10-14). The alpha and beta chains form an alternating ring which encloses part of the gamma chain. F(1) is attached to F(0) by a central stalk formed by the gamma and epsilon chains, while a peripheral stalk is formed by the delta and b chains.

The protein resides in the cell inner membrane. Its function is as follows. F(1)F(0) ATP synthase produces ATP from ADP in the presence of a proton or sodium gradient. F-type ATPases consist of two structural domains, F(1) containing the extramembraneous catalytic core and F(0) containing the membrane proton channel, linked together by a central stalk and a peripheral stalk. During catalysis, ATP synthesis in the catalytic domain of F(1) is coupled via a rotary mechanism of the central stalk subunits to proton translocation. This protein is part of the stalk that links CF(0) to CF(1). It either transmits conformational changes from CF(0) to CF(1) or is implicated in proton conduction. The sequence is that of ATP synthase subunit delta from Xanthomonas campestris pv. campestris (strain 8004).